The sequence spans 252 residues: 2-succinyl-6-hydroxy-2,4-cyclohexadiene-1-carboxylate synthase (252 aa).

This sequence belongs to the AB hydrolase superfamily. MenH family. In terms of assembly, monomer.

It catalyses the reaction 5-enolpyruvoyl-6-hydroxy-2-succinyl-cyclohex-3-ene-1-carboxylate = (1R,6R)-6-hydroxy-2-succinyl-cyclohexa-2,4-diene-1-carboxylate + pyruvate. It participates in quinol/quinone metabolism; 1,4-dihydroxy-2-naphthoate biosynthesis; 1,4-dihydroxy-2-naphthoate from chorismate: step 3/7. It functions in the pathway quinol/quinone metabolism; menaquinone biosynthesis. In terms of biological role, catalyzes a proton abstraction reaction that results in 2,5-elimination of pyruvate from 2-succinyl-5-enolpyruvyl-6-hydroxy-3-cyclohexene-1-carboxylate (SEPHCHC) and the formation of 2-succinyl-6-hydroxy-2,4-cyclohexadiene-1-carboxylate (SHCHC). This is 2-succinyl-6-hydroxy-2,4-cyclohexadiene-1-carboxylate synthase from Escherichia coli O17:K52:H18 (strain UMN026 / ExPEC).